Here is a 186-residue protein sequence, read N- to C-terminus: dCTP deaminase (186 aa).

107–112 (KSTYAR) contributes to the dCTP binding site. Residue glutamate 133 is the Proton donor/acceptor of the active site. DCTP contacts are provided by glutamine 152, tyrosine 166, and glutamine 176.

Belongs to the dCTP deaminase family. In terms of assembly, homotrimer.

It catalyses the reaction dCTP + H2O + H(+) = dUTP + NH4(+). The protein operates within pyrimidine metabolism; dUMP biosynthesis; dUMP from dCTP (dUTP route): step 1/2. Functionally, catalyzes the deamination of dCTP to dUTP. This is dCTP deaminase from Campylobacter concisus (strain 13826).